A 509-amino-acid polypeptide reads, in one-letter code: Probable cytochrome P450 513A1 (509 aa).

A helical membrane pass occupies residues 2 to 19; that stretch reads NYLVGLVLIFTIFYFFLQ. Cys-454 provides a ligand contact to heme.

This sequence belongs to the cytochrome P450 family. Requires heme as cofactor.

Its subcellular location is the membrane. The chain is Probable cytochrome P450 513A1 (cyp513A1) from Dictyostelium discoideum (Social amoeba).